The chain runs to 717 residues: Coupling protein TraD (717 aa).

The Cytoplasmic portion of the chain corresponds to 1-27; that stretch reads MSFNAKDMTQGGQIASMRIRMFSQIAN. A helical membrane pass occupies residues 28–47; it reads IMLYCLFIFFWILVGLVLWI. Residues 48 to 104 are Periplasmic-facing; the sequence is KISWQTFVNGCIYWWCTTLEGMRDLIKSQPVYEIQYYGKTFRMNAAQVLHDKYMIWC. The chain crosses the membrane as a helical span at residues 105-130; it reads SEQLWSAFVLAAVVALVICLITFFVV. Residues 131-717 lie on the Cytoplasmic side of the membrane; the sequence is SWILGRQGKQ…GEDVEPGDDF (587 aa). An ATP-binding site is contributed by 192 to 199; that stretch reads GTVGAGKS. Disordered stretches follow at residues 614 to 639 and 650 to 669; these read EDVT…DSGV and LKMK…ISES.

The protein belongs to the TrwB coupling protein family. Interacts with relaxosome component TraM. May form a hexamer in the membrane.

Its subcellular location is the cell inner membrane. Functionally, conjugative DNA transfer (CDT) is the unidirectional transfer of ssDNA plasmid from a donor to a recipient cell. It is the central mechanism by which antibiotic resistance and virulence factors are propagated in bacterial populations. Couples the transferosome to a type IV secretion system. Probably forms a pore through which single-stranded plasmid DNA is transferred to the secretion system. The last 37 residues are important for determining plasmid specificity and transfer efficiency, with additional specificity conferred by the TraD-TraM pair. This is Coupling protein TraD (traD) from Escherichia coli (strain K12).